The sequence spans 295 residues: Indole-3-glycerol phosphate synthase (295 aa).

Belongs to the TrpC family.

The catalysed reaction is 1-(2-carboxyphenylamino)-1-deoxy-D-ribulose 5-phosphate + H(+) = (1S,2R)-1-C-(indol-3-yl)glycerol 3-phosphate + CO2 + H2O. Its pathway is amino-acid biosynthesis; L-tryptophan biosynthesis; L-tryptophan from chorismate: step 4/5. In Prochlorococcus marinus (strain NATL2A), this protein is Indole-3-glycerol phosphate synthase.